The sequence spans 145 residues: D-aminoacyl-tRNA deacylase (145 aa).

Residues 137–138 (GP) carry the Gly-cisPro motif, important for rejection of L-amino acids motif.

Belongs to the DTD family. As to quaternary structure, homodimer.

The protein resides in the cytoplasm. It catalyses the reaction glycyl-tRNA(Ala) + H2O = tRNA(Ala) + glycine + H(+). The enzyme catalyses a D-aminoacyl-tRNA + H2O = a tRNA + a D-alpha-amino acid + H(+). An aminoacyl-tRNA editing enzyme that deacylates mischarged D-aminoacyl-tRNAs. Also deacylates mischarged glycyl-tRNA(Ala), protecting cells against glycine mischarging by AlaRS. Acts via tRNA-based rather than protein-based catalysis; rejects L-amino acids rather than detecting D-amino acids in the active site. By recycling D-aminoacyl-tRNA to D-amino acids and free tRNA molecules, this enzyme counteracts the toxicity associated with the formation of D-aminoacyl-tRNA entities in vivo and helps enforce protein L-homochirality. The polypeptide is D-aminoacyl-tRNA deacylase (Klebsiella pneumoniae subsp. pneumoniae (strain ATCC 700721 / MGH 78578)).